Here is a 592-residue protein sequence, read N- to C-terminus: A-type ATP synthase subunit A (592 aa).

Residue 236–243 participates in ATP binding; the sequence is GPFGSGKT.

It belongs to the ATPase alpha/beta chains family. Has multiple subunits with at least A(3), B(3), C, D, E, F, H, I and proteolipid K(x).

It is found in the cell membrane. The enzyme catalyses ATP + H2O + 4 H(+)(in) = ADP + phosphate + 5 H(+)(out). In terms of biological role, component of the A-type ATP synthase that produces ATP from ADP in the presence of a proton gradient across the membrane. The A chain is the catalytic subunit. The protein is A-type ATP synthase subunit A of Methanopyrus kandleri (strain AV19 / DSM 6324 / JCM 9639 / NBRC 100938).